We begin with the raw amino-acid sequence, 429 residues long: Enolase (429 aa).

Residue Gln-163 coordinates (2R)-2-phosphoglycerate. The Proton donor role is filled by Glu-205. Mg(2+) is bound by residues Asp-242, Glu-286, and Asp-313. Residues Lys-338, Arg-367, Ser-368, and Lys-389 each coordinate (2R)-2-phosphoglycerate. The active-site Proton acceptor is the Lys-338.

This sequence belongs to the enolase family. Requires Mg(2+) as cofactor.

The protein resides in the cytoplasm. It is found in the secreted. It localises to the cell surface. It carries out the reaction (2R)-2-phosphoglycerate = phosphoenolpyruvate + H2O. The protein operates within carbohydrate degradation; glycolysis; pyruvate from D-glyceraldehyde 3-phosphate: step 4/5. Functionally, catalyzes the reversible conversion of 2-phosphoglycerate (2-PG) into phosphoenolpyruvate (PEP). It is essential for the degradation of carbohydrates via glycolysis. This Geotalea uraniireducens (strain Rf4) (Geobacter uraniireducens) protein is Enolase.